Reading from the N-terminus, the 225-residue chain is MVSHSELRKLFYSADAVCFDVDSTVIREEGIDELAKICGVEDAVSEMTRRAMGGAVPFKAALTERLALIQPSREQVQRLIAEQPPHLTPGIRELVSRLQERNVQVFLISGGFRSIVEHVASKLNIPATNVFANRLKFYFNGEYAGFDETQPTAESGGKGKVIKLLKEKFHFKKIIMIGDGATDMEACPPADAFIGFGGNVIRQQVKDNAKWYITDFVELLGELEE.

Methionine 1 carries the post-translational modification N-acetylmethionine. Catalysis depends on aspartate 20, which acts as the Nucleophile. Mg(2+) contacts are provided by aspartate 20 and aspartate 22. 20–22 (DVD) provides a ligand contact to L-serine. Aspartate 22 functions as the Proton donor in the catalytic mechanism. Methionine 52 contacts O-phospho-L-serine. Glycine 53 provides a ligand contact to phosphate. Residues 109–111 (SGG) and lysine 158 contribute to the L-serine site. O-phospho-L-serine is bound by residues 109–111 (SGG) and lysine 158. Position 179 (aspartate 179) interacts with Mg(2+). Residue threonine 182 coordinates O-phospho-L-serine. Threonine 182 contributes to the phosphate binding site.

Belongs to the HAD-like hydrolase superfamily. SerB family. In terms of assembly, homodimer. The cofactor is Mg(2+).

It is found in the cytoplasm. The protein localises to the cytosol. It carries out the reaction O-phospho-L-serine + H2O = L-serine + phosphate. The catalysed reaction is O-phospho-D-serine + H2O = D-serine + phosphate. It functions in the pathway amino-acid biosynthesis; L-serine biosynthesis; L-serine from 3-phospho-D-glycerate: step 3/3. With respect to regulation, inhibited by calcium ions. In terms of biological role, catalyzes the last irreversible step in the biosynthesis of L-serine from carbohydrates, the dephosphorylation of O-phospho-L-serine to L-serine. L-serine can then be used in protein synthesis, to produce other amino acids, in nucleotide metabolism or in glutathione synthesis, or can be racemized to D-serine, a neuromodulator. May also act on O-phospho-D-serine. The sequence is that of Phosphoserine phosphatase from Homo sapiens (Human).